We begin with the raw amino-acid sequence, 1068 residues long: Ubiquitin-protein ligase E3B (1068 aa).

Met-1 carries the N-acetylmethionine modification. Residues 29–58 (RERAAVVIQAHVRSFLCRSRLQRDIRREID) enclose the IQ domain. The residue at position 419 (Ser-419) is a Phosphoserine. One can recognise an HECT domain in the interval 702 to 1068 (SQHAMKGVIR…ISMNTGFELS (367 aa)). Cys-1036 functions as the Glycyl thioester intermediate in the catalytic mechanism.

Widely expressed.

It is found in the postsynaptic density. The catalysed reaction is S-ubiquitinyl-[E2 ubiquitin-conjugating enzyme]-L-cysteine + [acceptor protein]-L-lysine = [E2 ubiquitin-conjugating enzyme]-L-cysteine + N(6)-ubiquitinyl-[acceptor protein]-L-lysine.. Its pathway is protein modification; protein ubiquitination. E3 ubiquitin-protein ligase which accepts ubiquitin from an E2 ubiquitin-conjugating enzyme in the form of a thioester and then directly transfers the ubiquitin to targeted substrates. Ubiquitinates BCKDK and targets it for degradation, thereby regulating various metabolic processes. Involved in the positive regulation of neurite branching in hippocampal neurons and the control of neuronal spine number and morphology, through the ubiquitination of PPP3CC. The sequence is that of Ubiquitin-protein ligase E3B (UBE3B) from Homo sapiens (Human).